The primary structure comprises 185 residues: Elongation factor P (185 aa).

It belongs to the elongation factor P family.

The protein resides in the cytoplasm. Its pathway is protein biosynthesis; polypeptide chain elongation. Its function is as follows. Involved in peptide bond synthesis. Stimulates efficient translation and peptide-bond synthesis on native or reconstituted 70S ribosomes in vitro. Probably functions indirectly by altering the affinity of the ribosome for aminoacyl-tRNA, thus increasing their reactivity as acceptors for peptidyl transferase. This chain is Elongation factor P, found in Nitrosomonas eutropha (strain DSM 101675 / C91 / Nm57).